Here is an 83-residue protein sequence, read N- to C-terminus: Disintegrin isoform D-3 (83 aa).

Positions 2–83 (PPVCGNELLE…GKSSDCPWNH (82 aa)) constitute a Disintegrin domain. 7 disulfides stabilise this stretch: Cys-5-Cys-24, Cys-16-Cys-34, Cys-18-Cys-29, Cys-28-Cys-51, Cys-42-Cys-48, Cys-47-Cys-72, and Cys-60-Cys-79. The Cell attachment site motif lies at 64–66 (RGD).

Belongs to the venom metalloproteinase (M12B) family. P-II subfamily. P-IIa sub-subfamily. Monomer (disintegrin). In terms of tissue distribution, expressed by the venom gland.

Its subcellular location is the secreted. In terms of biological role, inhibits fibrinogen interaction with platelets. Acts by binding to alpha-IIb/beta-3 (ITGA2B/ITGB3) on the platelet surface and inhibits aggregation induced by ADP, thrombin, platelet-activating factor and collagen. In Bitis arietans (African puff adder), this protein is Disintegrin isoform D-3.